The sequence spans 271 residues: Phosphatidate cytidylyltransferase (271 aa).

Transmembrane regions (helical) follow at residues 12–32 (LLPI…ALFI), 53–73 (FGRV…YHLP), 75–95 (LAGA…VLVL), 111–131 (LGMG…LKQW), 136–156 (GLII…YFSG), 174–194 (WEGV…VGLY), 199–219 (LGAL…SIVG), and 251–271 (SLTA…WGAP).

The protein belongs to the CDS family.

The protein resides in the cell inner membrane. The enzyme catalyses a 1,2-diacyl-sn-glycero-3-phosphate + CTP + H(+) = a CDP-1,2-diacyl-sn-glycerol + diphosphate. The protein operates within phospholipid metabolism; CDP-diacylglycerol biosynthesis; CDP-diacylglycerol from sn-glycerol 3-phosphate: step 3/3. This is Phosphatidate cytidylyltransferase (cdsA) from Pseudomonas aeruginosa (strain ATCC 15692 / DSM 22644 / CIP 104116 / JCM 14847 / LMG 12228 / 1C / PRS 101 / PAO1).